Consider the following 340-residue polypeptide: Immunoglobulin-binding protein 1 (340 aa).

Positions 47–61 (LELLEKAAGMLSQLD) constitute a UIM domain. The interaction with PPP2CA stretch occupies residues 99–203 (RLDHLQRARE…YLLHLRRWIG (105 aa)). Disordered regions lie at residues 221–242 (DKDS…PPMK) and 281–340 (LPDR…QNMG). The interval 226 to 291 (REESACQSSL…PDRGIAKPPS (66 aa)) is interaction with MID1. Position 242 is an N6-acetyllysine (K242). The span at 292 to 301 (ADFQRAAQQQ) shows a compositional bias: low complexity. Over residues 302 to 312 (EDQEQKDEENE) the composition is skewed to acidic residues. The segment covering 313-330 (EKALHRMREWDDWKDTHP) has biased composition (basic and acidic residues).

Belongs to the IGBP1/TAP42 family. Interacts with partially folded PPP2CA, but not with the fully active protein. Interacts with PPP2CB, and with PP4 and PP6. Interacts with MID1 and MID2. Interacts with ubiquitin. Post-translationally, phosphorylated. Monoubiquitination by MID1 triggers calpain-mediated cleavage and switches IGBP1 activity from protective to destructive.

The protein resides in the cytoplasm. Its function is as follows. Associated to surface IgM-receptor; may be involved in signal transduction. Involved in regulation of the catalytic activity of the phosphatases PP2A, PP4 and PP6 by protecting their partially folded catalytic subunits from degradative polyubiquitination until they associate with regulatory subunits. This chain is Immunoglobulin-binding protein 1 (Igbp1), found in Rattus norvegicus (Rat).